The primary structure comprises 127 residues: Small ribosomal subunit protein uS13 (127 aa).

The segment at 92 to 127 (HRMGLPVRGQRTRTNARTRRGVRRTVAGKKKASAKK) is disordered. A compositionally biased stretch (basic residues) spans 101–127 (QRTRTNARTRRGVRRTVAGKKKASAKK).

The protein belongs to the universal ribosomal protein uS13 family. In terms of assembly, part of the 30S ribosomal subunit. Forms a loose heterodimer with protein S19. Forms two bridges to the 50S subunit in the 70S ribosome.

Its function is as follows. Located at the top of the head of the 30S subunit, it contacts several helices of the 16S rRNA. In the 70S ribosome it contacts the 23S rRNA (bridge B1a) and protein L5 of the 50S subunit (bridge B1b), connecting the 2 subunits; these bridges are implicated in subunit movement. Contacts the tRNAs in the A and P-sites. The chain is Small ribosomal subunit protein uS13 from Trichodesmium erythraeum (strain IMS101).